Consider the following 560-residue polypeptide: Formate--tetrahydrofolate ligase (560 aa).

69-76 (TPAGEGKS) provides a ligand contact to ATP.

The protein belongs to the formate--tetrahydrofolate ligase family.

It carries out the reaction (6S)-5,6,7,8-tetrahydrofolate + formate + ATP = (6R)-10-formyltetrahydrofolate + ADP + phosphate. Its pathway is one-carbon metabolism; tetrahydrofolate interconversion. This is Formate--tetrahydrofolate ligase from Listeria monocytogenes serotype 4b (strain CLIP80459).